Consider the following 346-residue polypeptide: Melatonin receptor type 1C (346 aa).

Residues 1 to 26 lie on the Extracellular side of the membrane; that stretch reads MERPGSNGSCSGCRLEGGPAARAASG. N-linked (GlcNAc...) asparagine glycosylation occurs at asparagine 7. A helical transmembrane segment spans residues 27–47; the sequence is LAAVLIVTIVVDVLGNALVIL. Residues 48–60 lie on the Cytoplasmic side of the membrane; sequence SVLRNKKLRNAGN. Residues 61-81 form a helical membrane-spanning segment; the sequence is IFVVSLSVADLVVAVYPYPLI. Residues 82–99 lie on the Extracellular side of the membrane; the sequence is LSAIFHNGWTMGNIHCQI. Cysteine 97 and cysteine 174 are oxidised to a cystine. A helical transmembrane segment spans residues 100–120; the sequence is SGFLMGLSVIGSIFNITAIAI. At 121-139 the chain is on the cytoplasmic side; that stretch reads NRYCYICHSLRYDKLFNLK. Residues 140–160 form a helical membrane-spanning segment; that stretch reads NTCCYICLTWTLTVVAIVPNF. Residues 161 to 184 lie on the Extracellular side of the membrane; that stretch reads FVGSLQYDPRIYSCTFAQTVSTSY. A helical transmembrane segment spans residues 185 to 205; it reads TITVVVVHFIVPLSIVTFCYL. Residues 206-237 are Cytoplasmic-facing; it reads RIWILVIQVKHRVRQDCKQKIRAADIRNFLTM. A helical membrane pass occupies residues 238–258; sequence FVVFVLFAVCWGPLNFIGLAV. Residues 259–271 lie on the Extracellular side of the membrane; it reads SINPSKVQPHIPE. A helical transmembrane segment spans residues 272-292; the sequence is WLFVLSYFMAYFNSCLNAVIY. Topologically, residues 293–346 are cytoplasmic; that stretch reads GLLNQNFRKEYKRILLMLRTPRLLFIDVSKGGTEGLKSKPSPAVTNNNQAEIHL. The interval 326 to 346 is disordered; that stretch reads EGLKSKPSPAVTNNNQAEIHL. Residues 335 to 346 are compositionally biased toward polar residues; that stretch reads AVTNNNQAEIHL.

Belongs to the G-protein coupled receptor 1 family. In terms of tissue distribution, expressed in optic tectum, neostriatum, hypothalamus, thalamus and pineal gland, less in cerebellum and retina.

It is found in the cell membrane. In terms of biological role, high affinity receptor for melatonin. The activity of this receptor is mediated by pertussis toxin sensitive G proteins that inhibits adenylate cyclase activity. The protein is Melatonin receptor type 1C of Gallus gallus (Chicken).